Reading from the N-terminus, the 258-residue chain is Spectinomycin 9-adenylyltransferase (258 aa).

It catalyses the reaction spectinomycin + ATP = 9-O-adenylylspectinomycin + diphosphate. In terms of biological role, mediates bacterial resistance to spectinomycin, is probably a spectinomycin 9-adenylyltransferase. The polypeptide is Spectinomycin 9-adenylyltransferase (Campylobacter jejuni).